The sequence spans 120 residues: Large ribosomal subunit protein bL12 (120 aa).

Belongs to the bacterial ribosomal protein bL12 family. Homodimer. Part of the ribosomal stalk of the 50S ribosomal subunit. Forms a multimeric L10(L12)X complex, where L10 forms an elongated spine to which 2 to 4 L12 dimers bind in a sequential fashion. Binds GTP-bound translation factors.

Functionally, forms part of the ribosomal stalk which helps the ribosome interact with GTP-bound translation factors. Is thus essential for accurate translation. In Listeria monocytogenes serovar 1/2a (strain ATCC BAA-679 / EGD-e), this protein is Large ribosomal subunit protein bL12.